A 410-amino-acid chain; its full sequence is Beta-arrestin-2 (410 aa).

Tyrosine 48 bears the Phosphotyrosine mark. A hydroxyproline; by PHD2 mark is found at proline 176 and proline 181. Residues 241–410 (ADICLFSTAQ…KDDDCDDQFC (170 aa)) are interaction with TRAF6. Serine 361 carries the post-translational modification Phosphoserine. Residues 364–410 (RETDVPVDTNLIEFDTNYATDDDIVFEDFARLRLKGMKDDDCDDQFC) form an interaction with AP2B1 region. Phosphothreonine is present on threonine 383. A [DE]-X(1,2)-F-X-X-[FL]-X-X-X-R motif motif is present at residues 386 to 396 (DIVFEDFARLR).

This sequence belongs to the arrestin family. In terms of assembly, homooligomer; the self-association is mediated by InsP6-binding. Heterooligomer with ARRB1; the association is mediated by InsP6-binding. Interacts with ADRB2 and CHRM2. Interacts with PDE4A. Interacts with PDE4D. Interacts with MAPK10, MAPK1 and MAPK3. Interacts with DRD2. Interacts with FSHR. Interacts with CLTC. Interacts with HTR2C. Interacts with CCR5. Interacts with CXCR4. Interacts with SRC. Interacts with DUSP16; the interaction is interrupted by stimulation of AGTR1 and activation of MAPK10. Interacts with CHUK; the interaction is enhanced stimulation of ADRB2. Interacts with RELA. Interacts with MDM2; the interaction is enhanced by activation of GPCRs. Interacts with SLC9A5. Interacts with TRAF6. Interacts with IGF1R. Interacts with ENG. Interacts with ARRB2. Interacts with KIR2DL1, KIR2DL3 and KIR2DL4. Interacts with LDLR. Interacts with AP2B1. Interacts with C5AR1. Interacts with RAF1. Interacts with MAP2K1. Interacts with MAPK1. Interacts with MAPK10; the interaction enhances MAPK10 activation by MAP3K5. Interacts with MAP2K4; the interaction is enhanced by presence of MAP3K5 and MAPK10. Interacts with MAP3K5. Interacts with AKT1. Interacts with IKBKB and MAP3K14. Interacts with SMO (activated). Interacts with GSK3A and GSK3B. Interacts with CXCR4; the interaction is dependent on C-terminal phosphorylation of CXCR4 and allows activation of MAPK1 and MAPK3. Interacts with GPR143. Interacts with HCK and CXCR1 (phosphorylated). Associates with protein phosphatase 2A (PP2A). Interacts with ACKR3 and ACKR4. Interacts with ARRDC1; the interaction is direct. Interacts with GPR61, GPR62 and GPR135. Interacts (via NACHT and LRR domains) with NLRP3; this interaction is direct and inducible by omega-3 polyunsaturated fatty acids (PUFAs). Interacts with FFAR4 (via C-terminus); this interaction is stimulated by long-chain fatty acids (LCFAs). Interacts with GPR35. Interacts with GPR84. Interacts with TIGIT; this interaction inhibits the NF-kappa-B pathway. Interacts with TGFBR3. Post-translationally, phosphorylated at Thr-383 in the cytoplasm; probably dephosphorylated at the plasma membrane. The phosphorylation does not regulate internalization and recycling of ADRB2, interaction with clathrin or AP2B1. The ubiquitination status appears to regulate the formation and trafficking of beta-arrestin-GPCR complexes and signaling. Ubiquitination appears to occur GPCR-specific. Ubiquitinated by MDM2; the ubiquitination is required for rapid internalization of ADRB2. Deubiquitinated by USP33; the deubiquitination leads to a dissociation of the beta-arrestin-GPCR complex. Stimulation of a class A GPCR, such as ADRB2, induces transient ubiquitination and subsequently promotes association with USP33. Stimulation of a class B GPCR promotes a sustained ubiquitination. Deubiquitinated by USP20; allowing USP20 to deubiquitinate TRAF6 leading to inhibition of NF-kappa-B signaling. In terms of processing, hydroxylation by PHD2 modulates the rate of internalization by slowing down recruitment to the plasma membrane and inhibiting subsequent co-internalization with class A receptors. In terms of tissue distribution, predominantly localized in neuronal tissues and in the spleen.

It is found in the cytoplasm. It localises to the nucleus. The protein resides in the cell membrane. The protein localises to the membrane. Its subcellular location is the clathrin-coated pit. It is found in the cytoplasmic vesicle. In terms of biological role, functions in regulating agonist-mediated G-protein coupled receptor (GPCR) signaling by mediating both receptor desensitization and resensitization processes. During homologous desensitization, beta-arrestins bind to the GPRK-phosphorylated receptor and sterically preclude its coupling to the cognate G-protein; the binding appears to require additional receptor determinants exposed only in the active receptor conformation. The beta-arrestins target many receptors for internalization by acting as endocytic adapters (CLASPs, clathrin-associated sorting proteins) and recruiting the GPRCs to the adapter protein 2 complex 2 (AP-2) in clathrin-coated pits (CCPs). However, the extent of beta-arrestin involvement appears to vary significantly depending on the receptor, agonist and cell type. Internalized arrestin-receptor complexes traffic to intracellular endosomes, where they remain uncoupled from G-proteins. Two different modes of arrestin-mediated internalization occur. Class A receptors, like ADRB2, OPRM1, ENDRA, D1AR and ADRA1B dissociate from beta-arrestin at or near the plasma membrane and undergo rapid recycling. Class B receptors, like AVPR2, AGTR1, NTSR1, TRHR and TACR1 internalize as a complex with arrestin and traffic with it to endosomal vesicles, presumably as desensitized receptors, for extended periods of time. Receptor resensitization then requires that receptor-bound arrestin is removed so that the receptor can be dephosphorylated and returned to the plasma membrane. Mediates endocytosis of CCR7 following ligation of CCL19 but not CCL21. Involved in internalization of P2RY1, P2RY4, P2RY6 and P2RY11 and ATP-stimulated internalization of P2RY2. Involved in phosphorylation-dependent internalization of OPRD1 and subsequent recycling or degradation. Involved in ubiquitination of IGF1R. Beta-arrestins function as multivalent adapter proteins that can switch the GPCR from a G-protein signaling mode that transmits short-lived signals from the plasma membrane via small molecule second messengers and ion channels to a beta-arrestin signaling mode that transmits a distinct set of signals that are initiated as the receptor internalizes and transits the intracellular compartment. Acts as a signaling scaffold for MAPK pathways such as MAPK1/3 (ERK1/2) and MAPK10 (JNK3). ERK1/2 and JNK3 activated by the beta-arrestin scaffold are largely excluded from the nucleus and confined to cytoplasmic locations such as endocytic vesicles, also called beta-arrestin signalosomes. Acts as a signaling scaffold for the AKT1 pathway. GPCRs for which the beta-arrestin-mediated signaling relies on both ARRB1 and ARRB2 (codependent regulation) include ADRB2, F2RL1 and PTH1R. For some GPCRs the beta-arrestin-mediated signaling relies on either ARRB1 or ARRB2 and is inhibited by the other respective beta-arrestin form (reciprocal regulation). Increases ERK1/2 signaling in AGTR1- and AVPR2-mediated activation (reciprocal regulation). Involved in CCR7-mediated ERK1/2 signaling involving ligand CCL19. Is involved in type-1A angiotensin II receptor/AGTR1-mediated ERK activity. Is involved in type-1A angiotensin II receptor/AGTR1-mediated MAPK10 activity. Is involved in dopamine-stimulated AKT1 activity in the striatum by disrupting the association of AKT1 with its negative regulator PP2A. Involved in AGTR1-mediated chemotaxis. Appears to function as signaling scaffold involved in regulation of MIP-1-beta-stimulated CCR5-dependent chemotaxis. Involved in attenuation of NF-kappa-B-dependent transcription in response to GPCR or cytokine stimulation by interacting with and stabilizing CHUK. Suppresses UV-induced NF-kappa-B-dependent activation by interacting with CHUK. The function is promoted by stimulation of ADRB2 and dephosphorylation of ARRB2. Involved in IL8-mediated granule release in neutrophils. Involved in p53/TP53-mediated apoptosis by regulating MDM2 and reducing the MDM2-mediated degradation of p53/TP53. May serve as nuclear messenger for GPCRs. Upon stimulation of OR1D2, may be involved in regulation of gene expression during the early processes of fertilization. Also involved in regulation of receptors other than GPCRs. Involved in endocytosis of TGFBR2 and TGFBR3 and down-regulates TGF-beta signaling such as NF-kappa-B activation. Involved in endocytosis of low-density lipoprotein receptor/LDLR. Involved in endocytosis of smoothened homolog/Smo, which also requires GRK2. Involved in endocytosis of SLC9A5. Involved in endocytosis of ENG and subsequent TGF-beta-mediated ERK activation and migration of epithelial cells. Involved in Toll-like receptor and IL-1 receptor signaling through the interaction with TRAF6 which prevents TRAF6 autoubiquitination and oligomerization required for activation of NF-kappa-B and JUN. Involved in insulin resistance by acting as insulin-induced signaling scaffold for SRC, AKT1 and INSR. Involved in regulation of inhibitory signaling of natural killer cells by recruiting PTPN6 and PTPN11 to KIR2DL1. Involved in the internalization of the atypical chemokine receptor ACKR3. Acts as an adapter protein coupling FFAR4 receptor to specific downstream signaling pathways, as well as mediating receptor endocytosis. During the activation step of NLRP3 inflammasome, directly associates with NLRP3 leading to inhibition of pro-inflammatory cytokine release and inhibition of inflammation. This is Beta-arrestin-2 (Arrb2) from Mus musculus (Mouse).